Reading from the N-terminus, the 313-residue chain is Undecaprenyl-diphosphatase (313 aa).

The next 6 helical transmembrane spans lie at 121-141 (YRIGWYVIIATIPIGVLGFLF), 152-172 (LWLVSFMLIAFALVIAAAEHY), 187-207 (GLVMGFAQCLALIPGVSRSGA), 225-245 (FSFLLAIPAVTASGLFSLPDA), 259-279 (QLLVATIVSFVVGYASVAWLL), and 290-310 (FVGYRIVLGLVIMGLLGAGVI).

Belongs to the UppP family.

It localises to the cell membrane. It carries out the reaction di-trans,octa-cis-undecaprenyl diphosphate + H2O = di-trans,octa-cis-undecaprenyl phosphate + phosphate + H(+). Its function is as follows. Catalyzes the dephosphorylation of undecaprenyl diphosphate (UPP). Confers resistance to bacitracin. The polypeptide is Undecaprenyl-diphosphatase (Nocardia farcinica (strain IFM 10152)).